Reading from the N-terminus, the 512-residue chain is 2,3-bisphosphoglycerate-independent phosphoglycerate mutase (512 aa).

Residues Asp14 and Ser64 each coordinate Mn(2+). Residue Ser64 is the Phosphoserine intermediate of the active site. Residues His125, Arg155–Asp156, Arg187, Arg193, Arg259–Arg262, and Lys332 contribute to the substrate site. The Mn(2+) site is built by Asp399, His403, Asp440, His441, and His459.

It belongs to the BPG-independent phosphoglycerate mutase family. As to quaternary structure, monomer. Mn(2+) is required as a cofactor.

It catalyses the reaction (2R)-2-phosphoglycerate = (2R)-3-phosphoglycerate. The protein operates within carbohydrate degradation; glycolysis; pyruvate from D-glyceraldehyde 3-phosphate: step 3/5. In terms of biological role, catalyzes the interconversion of 2-phosphoglycerate and 3-phosphoglycerate. The protein is 2,3-bisphosphoglycerate-independent phosphoglycerate mutase of Ruthia magnifica subsp. Calyptogena magnifica.